The primary structure comprises 89 residues: Small ribosomal subunit protein uS15 (89 aa).

This sequence belongs to the universal ribosomal protein uS15 family. In terms of assembly, part of the 30S ribosomal subunit. Forms a bridge to the 50S subunit in the 70S ribosome, contacting the 23S rRNA.

Its function is as follows. One of the primary rRNA binding proteins, it binds directly to 16S rRNA where it helps nucleate assembly of the platform of the 30S subunit by binding and bridging several RNA helices of the 16S rRNA. Forms an intersubunit bridge (bridge B4) with the 23S rRNA of the 50S subunit in the ribosome. The chain is Small ribosomal subunit protein uS15 from Paenarthrobacter aurescens (strain TC1).